Here is a 627-residue protein sequence, read N- to C-terminus: Hemocyanin D chain (627 aa).

Cu cation is bound by residues His-171, His-175, His-202, His-322, His-326, and His-362. Asn-445 carries an N-linked (GlcNAc...) asparagine glycan. A disulfide bridge links Cys-531 with Cys-579.

The protein belongs to the tyrosinase family. Hemocyanin subfamily. Tarantula hemocyanin is a 24-chain polymer with seven different chains identified. In terms of tissue distribution, hemolymph.

Its subcellular location is the secreted. It is found in the extracellular space. Its function is as follows. Hemocyanins are copper-containing oxygen carriers occurring freely dissolved in the hemolymph of many mollusks and arthropods. This is Hemocyanin D chain (HCD) from Aphonopelma sp. (American tarantula).